The following is a 548-amino-acid chain: mRNA cleavage and polyadenylation factor CLP1 (548 aa).

Residues Glu19, Lys60, and 123–128 (SSGKTT) contribute to the ATP site. Residues 437 to 478 (ESEVKEEVKEEKNEKDGEIKQDGEGEKKGEGKGEGEGEGEGK) are compositionally biased toward basic and acidic residues. The tract at residues 437–500 (ESEVKEEVKE…DEEEVPFREE (64 aa)) is disordered. Over residues 479-494 (DGEEEGEAEGEDDEEE) the composition is skewed to acidic residues.

This sequence belongs to the Clp1 family. Clp1 subfamily. As to quaternary structure, component of a pre-mRNA cleavage factor complex. Interacts directly with PCF11.

It localises to the nucleus. In terms of biological role, required for endonucleolytic cleavage during polyadenylation-dependent pre-mRNA 3'-end formation. In Cryptococcus neoformans var. neoformans serotype D (strain JEC21 / ATCC MYA-565) (Filobasidiella neoformans), this protein is mRNA cleavage and polyadenylation factor CLP1.